Here is a 279-residue protein sequence, read N- to C-terminus: MKDIFLCSICNVSSGGCAEDCAYCTQSAKYRVDIEKYKQKSLENILEEARRARASGALGFCLVTAGRSLDSAKTAYISEAARSIKEAGLELHLIACCGSATKEALAELKKNGVDSYNHNLETAKSFFPKICTTHSWEERYETCESALEVGLGLCTGGIFGLGEGWSERLEFLHALQTLSPHSVPVNFYIPNPSLPLEVEALAQEEALECVRLAREYLPSARLMIAGGREKVFGQAQKPLFEAGINAVVLGDYLTTKGNRPSEDIAMIRSFGFEIAEACH.

The region spanning 1–228 (MKDIFLCSIC…SARLMIAGGR (228 aa)) is the Radical SAM core domain. [4Fe-4S] cluster is bound by residues C17, C21, and C24. Positions 61, 96, 154, and 221 each coordinate [2Fe-2S] cluster.

It belongs to the radical SAM superfamily. Biotin synthase family. As to quaternary structure, homodimer. The cofactor is [4Fe-4S] cluster. [2Fe-2S] cluster is required as a cofactor.

It carries out the reaction (4R,5S)-dethiobiotin + (sulfur carrier)-SH + 2 reduced [2Fe-2S]-[ferredoxin] + 2 S-adenosyl-L-methionine = (sulfur carrier)-H + biotin + 2 5'-deoxyadenosine + 2 L-methionine + 2 oxidized [2Fe-2S]-[ferredoxin]. It functions in the pathway cofactor biosynthesis; biotin biosynthesis; biotin from 7,8-diaminononanoate: step 2/2. Its function is as follows. Catalyzes the conversion of dethiobiotin (DTB) to biotin by the insertion of a sulfur atom into dethiobiotin via a radical-based mechanism. The polypeptide is Biotin synthase (Wolinella succinogenes (strain ATCC 29543 / DSM 1740 / CCUG 13145 / JCM 31913 / LMG 7466 / NCTC 11488 / FDC 602W) (Vibrio succinogenes)).